A 119-amino-acid chain; its full sequence is Toxin ICK-9 (119 aa).

The signal sequence occupies residues 1 to 19 (MMKLYSLVIIATLAAAAFA). 4 disulfide bridges follow: Cys59–Cys74, Cys67–Cys80, Cys71–Cys116, and Cys73–Cys87.

It belongs to the neurotoxin 25 family. ICK-8 subfamily. Expressed by the venom gland.

It localises to the secreted. Ion channel inhibitor. In Trittame loki (Brush-footed trapdoor spider), this protein is Toxin ICK-9.